The primary structure comprises 137 residues: MSSNKVTITEVAKHAGVSVTTVSMVLGNKGRISPDTIEKVNASVEALGYIRNRAAANLRSNSSEIIGLILKDISDPYDAEVTAGLSEEIEQQGYMLFLAQCGDSQEKFEHCVLTMARQGVGGIAFCSIGENQQLNVD.

The HTH lacI-type domain occupies 6-60 (VTITEVAKHAGVSVTTVSMVLGNKGRISPDTIEKVNASVEALGYIRNRAAANLRS). A DNA-binding region (H-T-H motif) is located at residues 8-27 (ITEVAKHAGVSVTTVSMVLG).

Its function is as follows. Repressor for the malX and malY genes. In Vibrio furnissii, this protein is Maltose regulon regulatory protein MalI (malI).